Here is a 131-residue protein sequence, read N- to C-terminus: Putative pre-16S rRNA nuclease (131 aa).

The protein belongs to the YqgF nuclease family.

It is found in the cytoplasm. Its function is as follows. Could be a nuclease involved in processing of the 5'-end of pre-16S rRNA. In Bordetella avium (strain 197N), this protein is Putative pre-16S rRNA nuclease.